Consider the following 276-residue polypeptide: Putative glycosyltransferase 6 domain-containing protein 1 (276 aa).

Over 1–6 the chain is Cytoplasmic; the sequence is MNSKRM. The helical; Signal-anchor for type II membrane protein transmembrane segment at 7–23 threads the bilayer; the sequence is LLLVLFAFSLMLVERYF. Residues 24–276 lie on the Lumenal side of the membrane; it reads RNHQVEELRL…NKYFYLNKPT (253 aa). N-linked (GlcNAc...) asparagine glycosylation is present at asparagine 74. Substrate is bound by residues 82–87, 173–175, and 195–198; these read FATGRF, AAN, and HAWW. Glutamate 263 (nucleophile) is an active-site residue.

The protein belongs to the glycosyltransferase 6 family. It depends on Mn(2+) as a cofactor. Expressed in both healthy and inflamed gingival tissue samples at similar levels, with higher expression in the gingival connective tissue compared to gingival epithelium. Strongest expression in testis, followed by leukocytes.

Its subcellular location is the membrane. The protein is Putative glycosyltransferase 6 domain-containing protein 1 (GLT6D1) of Homo sapiens (Human).